Consider the following 396-residue polypeptide: Elongation factor Tu (396 aa).

Residues 10–206 (KEHVNIGTIG…AVDTWIETPV (197 aa)) enclose the tr-type G domain. Residues 19–26 (GHVDHGKT) are G1. 19-26 (GHVDHGKT) serves as a coordination point for GTP. Thr26 contributes to the Mg(2+) binding site. Residues 60–64 (GITIN) are G2. Residues 81 to 84 (DCPG) form a G3 region. Residues 81 to 85 (DCPGH) and 136 to 139 (NKCD) each bind GTP. The segment at 136–139 (NKCD) is G4. Residues 176–178 (SAL) form a G5 region.

This sequence belongs to the TRAFAC class translation factor GTPase superfamily. Classic translation factor GTPase family. EF-Tu/EF-1A subfamily. Monomer.

Its subcellular location is the cytoplasm. The enzyme catalyses GTP + H2O = GDP + phosphate + H(+). In terms of biological role, GTP hydrolase that promotes the GTP-dependent binding of aminoacyl-tRNA to the A-site of ribosomes during protein biosynthesis. The polypeptide is Elongation factor Tu (Mycoplasmopsis agalactiae (strain NCTC 10123 / CIP 59.7 / PG2) (Mycoplasma agalactiae)).